Consider the following 333-residue polypeptide: Ketol-acid reductoisomerase (NADP(+)) (333 aa).

The 181-residue stretch at 2 to 182 (AKIYYDEDAS…GATRAGVIET (181 aa)) folds into the KARI N-terminal Rossmann domain. Residues 25–28 (YGSQ), S51, S53, and 83–86 (DTVQ) each bind NADP(+). H108 is an active-site residue. G134 serves as a coordination point for NADP(+). Positions 183–327 (TFKEETETDL…EELRKMMPWL (145 aa)) constitute a KARI C-terminal knotted domain. 4 residues coordinate Mg(2+): D191, E195, E227, and E231. S252 contributes to the substrate binding site.

This sequence belongs to the ketol-acid reductoisomerase family. The cofactor is Mg(2+).

The enzyme catalyses (2R)-2,3-dihydroxy-3-methylbutanoate + NADP(+) = (2S)-2-acetolactate + NADPH + H(+). It catalyses the reaction (2R,3R)-2,3-dihydroxy-3-methylpentanoate + NADP(+) = (S)-2-ethyl-2-hydroxy-3-oxobutanoate + NADPH + H(+). The protein operates within amino-acid biosynthesis; L-isoleucine biosynthesis; L-isoleucine from 2-oxobutanoate: step 2/4. It participates in amino-acid biosynthesis; L-valine biosynthesis; L-valine from pyruvate: step 2/4. Its function is as follows. Involved in the biosynthesis of branched-chain amino acids (BCAA). Catalyzes an alkyl-migration followed by a ketol-acid reduction of (S)-2-acetolactate (S2AL) to yield (R)-2,3-dihydroxy-isovalerate. In the isomerase reaction, S2AL is rearranged via a Mg-dependent methyl migration to produce 3-hydroxy-3-methyl-2-ketobutyrate (HMKB). In the reductase reaction, this 2-ketoacid undergoes a metal-dependent reduction by NADPH to yield (R)-2,3-dihydroxy-isovalerate. This chain is Ketol-acid reductoisomerase (NADP(+)), found in Aquifex aeolicus (strain VF5).